A 482-amino-acid chain; its full sequence is Caspase-8 (482 aa).

Positions 1–218 (MDFHSCLYDI…DMWDSPGEQE (218 aa)) are excised as a propeptide. 2 consecutive DED domains span residues 2–80 (DFHS…RVLK) and 100–177 (AYRV…RIDD). A phosphoserine mark is found at serine 188 and serine 213. Histidine 319 is a catalytic residue. Tyrosine 336 is subject to Phosphotyrosine. Residue cysteine 362 is part of the active site. Residues 379–388 (LEQEHVLEED) constitute a propeptide that is removed on maturation. Serine 390 is modified (phosphoserine; by CDK1).

This sequence belongs to the peptidase C14A family. As to quaternary structure, heterotetramer that consists of two anti-parallel arranged heterodimers, each one formed by a 18 kDa (p18) and a 10 kDa (p10) subunit. Component of the death-induced signaling complex (DISC) composed of cell surface receptor FAS/CD95 or TNFRSF1A, adapter protein FADD and the CASP8 protease; recruitment of CASP8 to the complex is required for processing of CASP8 into the p18 and p10 subunits. Component of the AIM2 PANoptosome complex, a multiprotein complex that drives inflammatory cell death (PANoptosis). Interacts with CFLAR and PEA15. Interacts with RFFL and RNF34; negatively regulate CASP8 through proteasomal degradation. Interacts with TNFAIP8L2. Interacts with CASP8AP2. Interacts with NOL3; decreases CASP8 activity in a mitochondria localization- and phosphorylation-dependent manner and this interaction is dissociated by calcium. Interacts with UBR2. Interacts with RIPK1. Interacts with stimulated TNFRSF10B; this interaction is followed by CASP8 proteolytic cleavage and activation. Generation of the subunits requires association with the death-inducing signaling complex (DISC), whereas additional processing is likely due to the autocatalytic activity of the activated protease. GZMB and CASP10 can be involved in these processing events. Post-translationally, phosphorylation on Ser-389 during mitosis by CDK1 inhibits activation by proteolysis and prevents apoptosis. This phosphorylation occurs in cancer cell lines, as well as in primary breast tissues and lymphocytes.

Its subcellular location is the cytoplasm. The protein localises to the nucleus. It catalyses the reaction Strict requirement for Asp at position P1 and has a preferred cleavage sequence of (Leu/Asp/Val)-Glu-Thr-Asp-|-(Gly/Ser/Ala).. CASP8 activity is restricted by RIPK1. Thiol protease that plays a key role in programmed cell death by acting as a molecular switch for apoptosis, necroptosis and pyroptosis, and is required to prevent tissue damage during embryonic development and adulthood. Initiator protease that induces extrinsic apoptosis by mediating cleavage and activation of effector caspases responsible for FAS/CD95-mediated and TNFRSF1A-induced cell death. Cleaves and activates effector caspases CASP3, CASP4, CASP6, CASP7, CASP9 and CASP10. Binding to the adapter molecule FADD recruits it to either receptor FAS/CD95 or TNFRSF1A. The resulting aggregate called the death-inducing signaling complex (DISC) performs CASP8 proteolytic activation. The active dimeric enzyme is then liberated from the DISC and free to activate downstream apoptotic proteases. Proteolytic fragments of the N-terminal propeptide (termed CAP3, CAP5 and CAP6) are likely retained in the DISC. In addition to extrinsic apoptosis, also acts as a negative regulator of necroptosis: acts by cleaving RIPK1 at 'Asp-325', which is crucial to inhibit RIPK1 kinase activity, limiting TNF-induced apoptosis, necroptosis and inflammatory response. Also able to initiate pyroptosis by mediating cleavage and activation of gasdermin-C and -D (GSDMC and GSDMD, respectively): gasdermin cleavage promotes release of the N-terminal moiety that binds to membranes and forms pores, triggering pyroptosis. Initiates pyroptosis following inactivation of MAP3K7/TAK1. Also acts as a regulator of innate immunity by mediating cleavage and inactivation of N4BP1 downstream of TLR3 or TLR4, thereby promoting cytokine production. May participate in the Granzyme B (GZMB) cell death pathways. Cleaves PARP1 and PARP2. This is Caspase-8 from Rattus norvegicus (Rat).